Reading from the N-terminus, the 43-residue chain is Protein PsbN (43 aa).

The chain crosses the membrane as a helical span at residues 5-27; it reads TLVTIFISGSLVSFTGYALYTAF.

Belongs to the PsbN family.

The protein localises to the plastid. Its subcellular location is the chloroplast thylakoid membrane. May play a role in photosystem I and II biogenesis. This Piper cenocladum (Ant piper) protein is Protein PsbN.